Reading from the N-terminus, the 258-residue chain is Type III pantothenate kinase (258 aa).

Residue 12–19 (DIGNTSIA) participates in ATP binding. Substrate is bound by residues tyrosine 94 and 109–112 (GSDV). Aspartate 111 acts as the Proton acceptor in catalysis. Aspartate 132 lines the K(+) pocket. Residue threonine 135 coordinates ATP. Threonine 187 provides a ligand contact to substrate.

Belongs to the type III pantothenate kinase family. Homodimer. NH4(+) serves as cofactor. Requires K(+) as cofactor.

The protein resides in the cytoplasm. The enzyme catalyses (R)-pantothenate + ATP = (R)-4'-phosphopantothenate + ADP + H(+). It functions in the pathway cofactor biosynthesis; coenzyme A biosynthesis; CoA from (R)-pantothenate: step 1/5. Catalyzes the phosphorylation of pantothenate (Pan), the first step in CoA biosynthesis. This is Type III pantothenate kinase from Borreliella afzelii (strain PKo) (Borrelia afzelii).